Here is a 455-residue protein sequence, read N- to C-terminus: Bifunctional protein GlmU (455 aa).

The interval 1–226 (MSLDIVILAA…AMEVQGANDR (226 aa)) is pyrophosphorylase. Residues 8-11 (LAAG), K22, Q73, 78-79 (GT), 99-101 (YGD), G136, E151, N166, and N224 contribute to the UDP-N-acetyl-alpha-D-glucosamine site. D101 provides a ligand contact to Mg(2+). N224 contributes to the Mg(2+) binding site. The tract at residues 227 to 247 (RQLSELERHYQLREGRRLMAQ) is linker. The segment at 248-455 (GVTLRDPARF…WKRPEKIKKS (208 aa)) is N-acetyltransferase. Positions 330 and 348 each coordinate UDP-N-acetyl-alpha-D-glucosamine. The active-site Proton acceptor is H360. UDP-N-acetyl-alpha-D-glucosamine is bound by residues Y363 and N374. Residues A377, 383-384 (NY), S402, A420, and R437 contribute to the acetyl-CoA site.

The protein in the N-terminal section; belongs to the N-acetylglucosamine-1-phosphate uridyltransferase family. It in the C-terminal section; belongs to the transferase hexapeptide repeat family. Homotrimer. The cofactor is Mg(2+).

Its subcellular location is the cytoplasm. It catalyses the reaction alpha-D-glucosamine 1-phosphate + acetyl-CoA = N-acetyl-alpha-D-glucosamine 1-phosphate + CoA + H(+). It carries out the reaction N-acetyl-alpha-D-glucosamine 1-phosphate + UTP + H(+) = UDP-N-acetyl-alpha-D-glucosamine + diphosphate. It functions in the pathway nucleotide-sugar biosynthesis; UDP-N-acetyl-alpha-D-glucosamine biosynthesis; N-acetyl-alpha-D-glucosamine 1-phosphate from alpha-D-glucosamine 6-phosphate (route II): step 2/2. Its pathway is nucleotide-sugar biosynthesis; UDP-N-acetyl-alpha-D-glucosamine biosynthesis; UDP-N-acetyl-alpha-D-glucosamine from N-acetyl-alpha-D-glucosamine 1-phosphate: step 1/1. It participates in bacterial outer membrane biogenesis; LPS lipid A biosynthesis. Functionally, catalyzes the last two sequential reactions in the de novo biosynthetic pathway for UDP-N-acetylglucosamine (UDP-GlcNAc). The C-terminal domain catalyzes the transfer of acetyl group from acetyl coenzyme A to glucosamine-1-phosphate (GlcN-1-P) to produce N-acetylglucosamine-1-phosphate (GlcNAc-1-P), which is converted into UDP-GlcNAc by the transfer of uridine 5-monophosphate (from uridine 5-triphosphate), a reaction catalyzed by the N-terminal domain. The protein is Bifunctional protein GlmU of Pseudomonas putida (strain ATCC 700007 / DSM 6899 / JCM 31910 / BCRC 17059 / LMG 24140 / F1).